A 2251-amino-acid chain; its full sequence is U3 small nucleolar RNA-associated protein 10 (2251 aa).

Residues 945–983 (VVPLLLTALADAEAAIRLAAIACLAHILAICKYAGDLAK) form an HEAT repeat. The next 2 helical transmembrane spans lie at 962–982 (LAAI…GDLA) and 1460–1480 (LLVD…LLVD).

It belongs to the HEATR1/UTP10 family. In terms of assembly, component of the ribosomal small subunit (SSU) processome.

The protein resides in the nucleus. It localises to the nucleolus. The protein localises to the membrane. Functionally, involved in nucleolar processing of pre-18S ribosomal RNA. Involved in ribosome biosynthesis. The protein is U3 small nucleolar RNA-associated protein 10 of Mycosarcoma maydis (Corn smut fungus).